The following is a 540-amino-acid chain: Chaperonin GroEL (540 aa).

Residues 29 to 32 (TLGP), 86 to 90 (DGTTT), Gly413, 476 to 478 (NAA), and Asp492 contribute to the ATP site.

This sequence belongs to the chaperonin (HSP60) family. Forms a cylinder of 14 subunits composed of two heptameric rings stacked back-to-back. Interacts with the co-chaperonin GroES.

It localises to the cytoplasm. The enzyme catalyses ATP + H2O + a folded polypeptide = ADP + phosphate + an unfolded polypeptide.. Functionally, together with its co-chaperonin GroES, plays an essential role in assisting protein folding. The GroEL-GroES system forms a nano-cage that allows encapsulation of the non-native substrate proteins and provides a physical environment optimized to promote and accelerate protein folding. In Streptococcus pneumoniae (strain ATCC 700669 / Spain 23F-1), this protein is Chaperonin GroEL.